We begin with the raw amino-acid sequence, 180 residues long: Large ribosomal subunit protein uL5 (180 aa).

It belongs to the universal ribosomal protein uL5 family. As to quaternary structure, part of the 50S ribosomal subunit; part of the 5S rRNA/L5/L18/L25 subcomplex. Contacts the 5S rRNA and the P site tRNA. Forms a bridge to the 30S subunit in the 70S ribosome.

In terms of biological role, this is one of the proteins that bind and probably mediate the attachment of the 5S RNA into the large ribosomal subunit, where it forms part of the central protuberance. In the 70S ribosome it contacts protein S13 of the 30S subunit (bridge B1b), connecting the 2 subunits; this bridge is implicated in subunit movement. Contacts the P site tRNA; the 5S rRNA and some of its associated proteins might help stabilize positioning of ribosome-bound tRNAs. This Chlamydia trachomatis serovar L2 (strain ATCC VR-902B / DSM 19102 / 434/Bu) protein is Large ribosomal subunit protein uL5.